Reading from the N-terminus, the 328-residue chain is D-cysteine desulfhydrase (328 aa).

Lys51 carries the post-translational modification N6-(pyridoxal phosphate)lysine.

This sequence belongs to the ACC deaminase/D-cysteine desulfhydrase family. As to quaternary structure, homodimer. It depends on pyridoxal 5'-phosphate as a cofactor.

The catalysed reaction is D-cysteine + H2O = hydrogen sulfide + pyruvate + NH4(+) + H(+). Its function is as follows. Catalyzes the alpha,beta-elimination reaction of D-cysteine and of several D-cysteine derivatives. It could be a defense mechanism against D-cysteine. This Salmonella choleraesuis (strain SC-B67) protein is D-cysteine desulfhydrase.